The chain runs to 349 residues: Phosphate acyltransferase (349 aa).

The protein belongs to the PlsX family. As to quaternary structure, homodimer. Probably interacts with PlsY.

It localises to the cytoplasm. The enzyme catalyses a fatty acyl-[ACP] + phosphate = an acyl phosphate + holo-[ACP]. Its pathway is lipid metabolism; phospholipid metabolism. Functionally, catalyzes the reversible formation of acyl-phosphate (acyl-PO(4)) from acyl-[acyl-carrier-protein] (acyl-ACP). This enzyme utilizes acyl-ACP as fatty acyl donor, but not acyl-CoA. The sequence is that of Phosphate acyltransferase from Rhodopseudomonas palustris (strain BisA53).